We begin with the raw amino-acid sequence, 457 residues long: Siroheme synthase (457 aa).

Residues 1-204 (MDHLPIFCQL…QDQQAVEETT (204 aa)) are precorrin-2 dehydrogenase /sirohydrochlorin ferrochelatase. NAD(+) contacts are provided by residues 22–23 (DV) and 43–44 (LA). The residue at position 128 (S128) is a Phosphoserine. The uroporphyrinogen-III C-methyltransferase stretch occupies residues 216–457 (GEVVLVGAGP…REKLNWFSNH (242 aa)). P225 contacts S-adenosyl-L-methionine. The active-site Proton acceptor is D248. K270 (proton donor) is an active-site residue. Residues 301–303 (GGD), I306, 331–332 (TA), M382, and G411 each bind S-adenosyl-L-methionine.

In the N-terminal section; belongs to the precorrin-2 dehydrogenase / sirohydrochlorin ferrochelatase family. This sequence in the C-terminal section; belongs to the precorrin methyltransferase family.

It catalyses the reaction uroporphyrinogen III + 2 S-adenosyl-L-methionine = precorrin-2 + 2 S-adenosyl-L-homocysteine + H(+). It carries out the reaction precorrin-2 + NAD(+) = sirohydrochlorin + NADH + 2 H(+). The enzyme catalyses siroheme + 2 H(+) = sirohydrochlorin + Fe(2+). Its pathway is cofactor biosynthesis; adenosylcobalamin biosynthesis; precorrin-2 from uroporphyrinogen III: step 1/1. It participates in cofactor biosynthesis; adenosylcobalamin biosynthesis; sirohydrochlorin from precorrin-2: step 1/1. It functions in the pathway porphyrin-containing compound metabolism; siroheme biosynthesis; precorrin-2 from uroporphyrinogen III: step 1/1. The protein operates within porphyrin-containing compound metabolism; siroheme biosynthesis; siroheme from sirohydrochlorin: step 1/1. Its pathway is porphyrin-containing compound metabolism; siroheme biosynthesis; sirohydrochlorin from precorrin-2: step 1/1. Multifunctional enzyme that catalyzes the SAM-dependent methylations of uroporphyrinogen III at position C-2 and C-7 to form precorrin-2 via precorrin-1. Then it catalyzes the NAD-dependent ring dehydrogenation of precorrin-2 to yield sirohydrochlorin. Finally, it catalyzes the ferrochelation of sirohydrochlorin to yield siroheme. The polypeptide is Siroheme synthase (Enterobacter sp. (strain 638)).